The following is a 787-amino-acid chain: Glycine-rich domain-containing protein 2 (787 aa).

As to expression, expressed in leaves, inflorescences, buds, flowers and immature siliques.

Its function is as follows. Involved in development and stress responses, probably through an auxin-dependent mechanism. This chain is Glycine-rich domain-containing protein 2, found in Arabidopsis thaliana (Mouse-ear cress).